A 371-amino-acid chain; its full sequence is Peptide chain release factor 2 (371 aa).

Gln253 is modified (N5-methylglutamine).

It belongs to the prokaryotic/mitochondrial release factor family. In terms of processing, methylated by PrmC. Methylation increases the termination efficiency of RF2.

The protein resides in the cytoplasm. Its function is as follows. Peptide chain release factor 2 directs the termination of translation in response to the peptide chain termination codons UGA and UAA. This Mycobacterium marinum (strain ATCC BAA-535 / M) protein is Peptide chain release factor 2.